Here is a 238-residue protein sequence, read N- to C-terminus: MGDNLKVIEADSVSYDYPDGSAGVREVSLEIFEGDRVGLIGANGSGKSTLILLLAGLLRPTKGKIRIFGREIDKKNVEEIRRKIGVVFQNPDDFLFNPTVRDELLYVPRQLEWSEEEMENAVKEYAEMFGITHLLNKPPFRLSGGEKKKVEIASVLIYKPEVLLLDEPTAYVDGKTKRLILKILEDFKGTLVIATHELDVAEKLADKFVLLNLEHRIEAAGGKEILKNEELLEKAGVI.

The region spanning 8 to 238 (IEADSVSYDY…EELLEKAGVI (231 aa)) is the ABC transporter domain. 41–48 (GANGSGKS) lines the ATP pocket.

It belongs to the ABC transporter superfamily.

It localises to the cell membrane. Probably part of an ABC transporter complex. Responsible for energy coupling to the transport system. This is Putative ABC transporter ATP-binding protein AF_1841 from Archaeoglobus fulgidus (strain ATCC 49558 / DSM 4304 / JCM 9628 / NBRC 100126 / VC-16).